The primary structure comprises 217 residues: Thymidylate kinase (217 aa).

ATP is bound at residue 12-19 (GIDGSGKS).

The protein belongs to the thymidylate kinase family.

The enzyme catalyses dTMP + ATP = dTDP + ADP. Functionally, phosphorylation of dTMP to form dTDP in both de novo and salvage pathways of dTTP synthesis. This chain is Thymidylate kinase, found in Cereibacter sphaeroides (strain ATCC 17023 / DSM 158 / JCM 6121 / CCUG 31486 / LMG 2827 / NBRC 12203 / NCIMB 8253 / ATH 2.4.1.) (Rhodobacter sphaeroides).